The primary structure comprises 125 residues: C-X-C motif chemokine 9 (125 aa).

The N-terminal stretch at 1 to 21 (MKKSAPLFLGIIFLTLTGVQG) is a signal peptide. Intrachain disulfides connect C30/C57 and C32/C73. The interval 91-125 (QVNQKKKQRKGKKYKKTKKVPKVKRSQRPSQKKTT) is disordered. The segment covering 93-125 (NQKKKQRKGKKYKKTKKVPKVKRSQRPSQKKTT) has biased composition (basic residues).

Belongs to the intercrine alpha (chemokine CxC) family.

It is found in the secreted. Cytokine that affects the growth, movement, or activation state of cells that participate in immune and inflammatory response. Chemotactic for activated T-cells. Binds to CXCR3. This is C-X-C motif chemokine 9 (CXCL9) from Bos taurus (Bovine).